Consider the following 307-residue polypeptide: Small ribosomal subunit biogenesis GTPase RsgA (307 aa).

The segment at Met-1 to Asn-21 is disordered. Residues Arg-85 to Phe-242 form the CP-type G domain. GTP contacts are provided by residues Asn-135–Asp-138 and Gly-184–Thr-192. Residues Cys-266, Cys-271, His-273, and Cys-279 each contribute to the Zn(2+) site.

Belongs to the TRAFAC class YlqF/YawG GTPase family. RsgA subfamily. As to quaternary structure, monomer. Associates with 30S ribosomal subunit, binds 16S rRNA. The cofactor is Zn(2+).

It is found in the cytoplasm. Its function is as follows. One of several proteins that assist in the late maturation steps of the functional core of the 30S ribosomal subunit. Helps release RbfA from mature subunits. May play a role in the assembly of ribosomal proteins into the subunit. Circularly permuted GTPase that catalyzes slow GTP hydrolysis, GTPase activity is stimulated by the 30S ribosomal subunit. This chain is Small ribosomal subunit biogenesis GTPase RsgA, found in Neisseria meningitidis serogroup B (strain ATCC BAA-335 / MC58).